Consider the following 248-residue polypeptide: MSEKRPLILLPAVDVVEGRAVRLVQGKAGSETEYGSALDAALGWQRDGAEWIHLVDLDAAFGRGSNRELLADVVGRLDVAVELSGGIRDDESLEAALATGCARVNIGTAALENPQWCAKVVAEFGDKVAVGLDVKIVDDQHRLRGRGWETDGGDLWEVLDRLDSEGCSRYVVTDVTKDGTLQGPNLDLLGRVADRTDAPVIASGGVSSLDDLRAIATLTDRGVEGAIVGKALYAGRFTLPEALAAMGQ.

Aspartate 14 (proton acceptor) is an active-site residue. Aspartate 133 serves as the catalytic Proton donor.

It belongs to the HisA/HisF family.

It is found in the cytoplasm. It carries out the reaction 1-(5-phospho-beta-D-ribosyl)-5-[(5-phospho-beta-D-ribosylamino)methylideneamino]imidazole-4-carboxamide = 5-[(5-phospho-1-deoxy-D-ribulos-1-ylimino)methylamino]-1-(5-phospho-beta-D-ribosyl)imidazole-4-carboxamide. The enzyme catalyses N-(5-phospho-beta-D-ribosyl)anthranilate = 1-(2-carboxyphenylamino)-1-deoxy-D-ribulose 5-phosphate. It functions in the pathway amino-acid biosynthesis; L-histidine biosynthesis; L-histidine from 5-phospho-alpha-D-ribose 1-diphosphate: step 4/9. The protein operates within amino-acid biosynthesis; L-tryptophan biosynthesis; L-tryptophan from chorismate: step 3/5. In terms of biological role, involved in both the histidine and tryptophan biosynthetic pathways. In Mycobacterium sp. (strain JLS), this protein is Phosphoribosyl isomerase A.